The following is a 752-amino-acid chain: F-box and WD repeat domain containing protein 10B (752 aa).

6 WD repeats span residues 169 to 206, 451 to 490, 493 to 532, 534 to 569, 572 to 609, and 611 to 652; these read GLNQDITDVCFSPEKDHSSKSATSQVYWTAKTQHTSLP, GHAGSVRALFLCEEENFLLSGSYDLSIRYWDLKSGVCTRI, GHQGTITCMDLCKNRLVSGGRDCQVKVWDVDTGKCLKTFR, KDPILATRINDTYIVSSCERGLVKVWHIAMAQLVKT, GHEGAVKCLFFDQWHLLSGSTDGLVMAWSMVGKYERCL, and AFKH…KVIK.

In terms of tissue distribution, expressed in pancreas, heart and skeletal muscle.

This chain is F-box and WD repeat domain containing protein 10B, found in Homo sapiens (Human).